The chain runs to 283 residues: Succinate dehydrogenase [ubiquinone] iron-sulfur subunit, mitochondrial (283 aa).

Residues 66–145 (KKPTLQTYSI…PVKIYPLPHM (80 aa)) enclose the 2Fe-2S ferredoxin-type domain. Residues Cys-105, Cys-110, Cys-113, and Cys-125 each coordinate [2Fe-2S] cluster. Positions 186-216 (DRKKLDGMYECILCACCSTSCPSYWWNQDEY) constitute a 4Fe-4S ferredoxin-type domain. [4Fe-4S] cluster contacts are provided by Cys-196, Cys-199, and Cys-202. Residue Cys-206 coordinates [3Fe-4S] cluster. Trp-211 lines the a ubiquinone pocket. [3Fe-4S] cluster is bound by residues Cys-253 and Cys-259. Cys-263 is a [4Fe-4S] cluster binding site.

Belongs to the succinate dehydrogenase/fumarate reductase iron-sulfur protein family. In terms of assembly, component of complex II composed of four subunits: a flavoprotein (FP), an iron-sulfur protein (IP), and a cytochrome b composed of a large and a small subunit. [2Fe-2S] cluster is required as a cofactor. [3Fe-4S] cluster serves as cofactor. It depends on [4Fe-4S] cluster as a cofactor.

Its subcellular location is the mitochondrion inner membrane. It catalyses the reaction a quinone + succinate = fumarate + a quinol. It participates in carbohydrate metabolism; tricarboxylic acid cycle; fumarate from succinate (eukaryal route): step 1/1. Its function is as follows. Iron-sulfur protein (IP) subunit of succinate dehydrogenase (SDH) that is involved in complex II of the mitochondrial electron transport chain and is responsible for transferring electrons from succinate to ubiquinone (coenzyme Q). The sequence is that of Succinate dehydrogenase [ubiquinone] iron-sulfur subunit, mitochondrial (SDH2) from Uromyces fabae (Rust fungus).